We begin with the raw amino-acid sequence, 361 residues long: uncharacterized protein (361 aa).

41 to 48 is an ATP binding site; that stretch reads GPLNSGKT.

It belongs to the archaeal ATPase family.

This is an uncharacterized protein from Methanocaldococcus jannaschii (strain ATCC 43067 / DSM 2661 / JAL-1 / JCM 10045 / NBRC 100440) (Methanococcus jannaschii).